Consider the following 247-residue polypeptide: ATP synthase subunit a, chloroplastic (247 aa).

Helical transmembrane passes span glycine 36–glycine 56, isoleucine 95–isoleucine 115, isoleucine 134–serine 154, leucine 199–leucine 219, and glycine 220–glycine 240.

Belongs to the ATPase A chain family. In terms of assembly, F-type ATPases have 2 components, CF(1) - the catalytic core - and CF(0) - the membrane proton channel. CF(1) has five subunits: alpha(3), beta(3), gamma(1), delta(1), epsilon(1). CF(0) has four main subunits: a, b, b' and c.

The protein resides in the plastid. It localises to the chloroplast thylakoid membrane. Key component of the proton channel; it plays a direct role in the translocation of protons across the membrane. The chain is ATP synthase subunit a, chloroplastic from Tupiella akineta (Green alga).